The following is a 312-amino-acid chain: tRNA dimethylallyltransferase (312 aa).

18–25 (GPTASGKS) provides a ligand contact to ATP. 20–25 (TASGKS) contributes to the substrate binding site. Interaction with substrate tRNA regions lie at residues 43-46 (DSMQ) and 167-171 (QRILR).

It belongs to the IPP transferase family. Monomer. Requires Mg(2+) as cofactor.

The catalysed reaction is adenosine(37) in tRNA + dimethylallyl diphosphate = N(6)-dimethylallyladenosine(37) in tRNA + diphosphate. Catalyzes the transfer of a dimethylallyl group onto the adenine at position 37 in tRNAs that read codons beginning with uridine, leading to the formation of N6-(dimethylallyl)adenosine (i(6)A). The sequence is that of tRNA dimethylallyltransferase from Azorhizobium caulinodans (strain ATCC 43989 / DSM 5975 / JCM 20966 / LMG 6465 / NBRC 14845 / NCIMB 13405 / ORS 571).